The primary structure comprises 108 residues: Type III secretion system chaperone SseA (108 aa).

A coiled-coil region spans residues 69–97 (NQEAEKDLKKIVSLFKQLEVRLKQLNAQA).

In terms of assembly, binds to SseB and SseD.

The protein resides in the cytoplasm. In terms of biological role, functions as a type III secretion system (T3SS) chaperone, which is required for SseB and SseD accumulation and secretion. May have a direct role in secretion of SseB and SseD, or may facilitate their correct folding, for efficient secretion and function. Required for survival and replication within epithelial cells and macrophages. The sequence is that of Type III secretion system chaperone SseA (sseA) from Salmonella typhimurium (strain LT2 / SGSC1412 / ATCC 700720).